A 217-amino-acid chain; its full sequence is MNINDVKRAVSEIKEKSPQRKFEESVEIAVNLKDVDMSNPKNRINEEILLPNGRGKDVKIAVFGSDELKSKARGVADFVFGAEDISKFAEDKKAFKKIVNQAYFFIAEATLMANIGKSLGQVLGPRGKMPRPIPPGQDPAPLIKNLKNTVKARSRNALTFHVPVGTRSMDADKISENIMTVINRITGKLERGASNIRSIYVKTTMGNAVEIKAGDEK.

The protein belongs to the universal ribosomal protein uL1 family. In terms of assembly, part of the 50S ribosomal subunit.

Functionally, binds directly to 23S rRNA. Probably involved in E site tRNA release. Its function is as follows. Protein L1 is also a translational repressor protein, it controls the translation of its operon by binding to its mRNA. This chain is Large ribosomal subunit protein uL1, found in Thermoplasma acidophilum (strain ATCC 25905 / DSM 1728 / JCM 9062 / NBRC 15155 / AMRC-C165).